Here is a 336-residue protein sequence, read N- to C-terminus: Monoacylglycerol lipase ABHD6 (336 aa).

At 1–8 (MDLDVVNM) the chain is on the extracellular side. A helical; Signal-anchor for type II membrane protein transmembrane segment spans residues 9–29 (FVIAGGTLAIPILAFVASFLL). Over 30–336 (WPSALIRIYY…VHNTDNKKLN (307 aa)) the chain is Cytoplasmic. Residue Ser-148 is the Nucleophile of the active site. Residues Asp-278 and His-306 each act as charge relay system in the active site.

Belongs to the AB hydrolase superfamily. Widely expressed with higher expression in small intestine, liver and brown adipose tissue. In brain, expressed postsynaptically in cortical neurons but not detected in microglia (at protein level).

It localises to the late endosome membrane. It is found in the lysosome membrane. Its subcellular location is the mitochondrion membrane. It carries out the reaction Hydrolyzes glycerol monoesters of long-chain fatty acids.. The catalysed reaction is 2-(5Z,8Z,11Z,14Z-eicosatetraenoyl)-glycerol + H2O = glycerol + (5Z,8Z,11Z,14Z)-eicosatetraenoate + H(+). It catalyses the reaction 1-octanoylglycerol + H2O = octanoate + glycerol + H(+). The enzyme catalyses 1-decanoylglycerol + H2O = decanoate + glycerol + H(+). It carries out the reaction 1-dodecanoylglycerol + H2O = dodecanoate + glycerol + H(+). The catalysed reaction is 1-tetradecanoylglycerol + H2O = tetradecanoate + glycerol + H(+). It catalyses the reaction 2-hexadecanoylglycerol + H2O = glycerol + hexadecanoate + H(+). The enzyme catalyses 2-(9Z-octadecenoyl)-glycerol + H2O = glycerol + (9Z)-octadecenoate + H(+). It carries out the reaction 1-(9Z-octadecenoyl)-glycerol + H2O = glycerol + (9Z)-octadecenoate + H(+). The catalysed reaction is 2-(9Z,12Z-octadecadienoyl)-glycerol + H2O = (9Z,12Z)-octadecadienoate + glycerol + H(+). It catalyses the reaction 1-(5Z,8Z,11Z,14Z-eicosatetraenoyl)-glycerol + H2O = glycerol + (5Z,8Z,11Z,14Z)-eicosatetraenoate + H(+). The enzyme catalyses 1-(9Z,12Z-octadecadienoyl)-glycerol + H2O = (9Z,12Z)-octadecadienoate + glycerol + H(+). It carries out the reaction 3-(9Z-octadecenoyl)-sn-glycero-1-phospho-(3'-(9Z-octadecenoyl)-1'-sn-glycerol) + H2O = 3-(9Z-octadecenoyl)-sn-glycero-1-phospho-(1'-sn-glycerol) + (9Z)-octadecenoate + H(+). The catalysed reaction is (S,S)-2-(9Z-octadecenoyl)-sn-glycero-1-phospho-(2'-(9Z-octadecenoyl)-1'-sn-glycerol) + H2O = (S,S)-2-(9Z-octadecenoyl)-sn-glycero-1-phospho-(1'-sn-glycerol) + (9Z)-octadecenoate + H(+). It catalyses the reaction (R,R)-2-(9Z-octadecenoyl)-sn-glycero-3-phospho-(2'-(9Z-octadecenoyl)-3'-sn-glycerol) + H2O = (R,R)-2-(9Z-octadecenoyl)-sn-glycero-3-phospho-(3'-sn-glycerol) + (9Z)-octadecenoate + H(+). Functionally, lipase that preferentially hydrolysis medium-chain saturated monoacylglycerols including 2-arachidonoylglycerol. Through 2-arachidonoylglycerol degradation may regulate endocannabinoid signaling pathways. Also has a lysophosphatidyl lipase activity with a preference for lysophosphatidylglycerol among other lysophospholipids. Also able to degrade bis(monoacylglycero)phosphate (BMP) and constitutes the major enzyme for BMP catabolism. BMP, also known as lysobisphosphatidic acid, is enriched in late endosomes and lysosomes and plays a key role in the formation of intraluminal vesicles and in lipid sorting. The polypeptide is Monoacylglycerol lipase ABHD6 (Mus musculus (Mouse)).